A 1363-amino-acid polypeptide reads, in one-letter code: DNA-directed RNA polymerase subunit beta (1363 aa).

It belongs to the RNA polymerase beta chain family. As to quaternary structure, the RNAP catalytic core consists of 2 alpha, 1 beta, 1 beta' and 1 omega subunit. When a sigma factor is associated with the core the holoenzyme is formed, which can initiate transcription.

It carries out the reaction RNA(n) + a ribonucleoside 5'-triphosphate = RNA(n+1) + diphosphate. In terms of biological role, DNA-dependent RNA polymerase catalyzes the transcription of DNA into RNA using the four ribonucleoside triphosphates as substrates. This chain is DNA-directed RNA polymerase subunit beta, found in Pelagibacter ubique (strain HTCC1062).